The sequence spans 178 residues: Nicotinamide-nucleotide adenylyltransferase (178 aa).

The protein belongs to the archaeal NMN adenylyltransferase family.

It localises to the cytoplasm. It catalyses the reaction beta-nicotinamide D-ribonucleotide + ATP + H(+) = diphosphate + NAD(+). Its pathway is cofactor biosynthesis; NAD(+) biosynthesis; NAD(+) from nicotinamide D-ribonucleotide: step 1/1. The sequence is that of Nicotinamide-nucleotide adenylyltransferase from Pyrobaculum arsenaticum (strain DSM 13514 / JCM 11321 / PZ6).